Here is a 337-residue protein sequence, read N- to C-terminus: Probable cytosolic iron-sulfur protein assembly protein 1 (337 aa).

WD repeat units lie at residues 11–50, 57–96, 109–148, 155–194, 199–240, 252–290, and 301–337; these read LHNDKVWSIDFEPVRGLLATGSTDRAIKVLQLKNGKENLL, VHKKAVRSVAWRPHSDLLAAGSFDSTISIWTQSDLDLEEG, GHENEVKGISWSQDGCLLATCSRDKSVWIWETDEAGEEYE, EHSQDVKHVVWHTKHNLLASSSYDDTVRIWKDYDDDWECA, GHEG…EDDQ, AHRSQIYGVAWSPSGRIASVGADGVLAVYKEKQNDSEVS, and AHTVYEINTVKWVNIDGKEMLITAGDDGRVNLWNYQD.

This sequence belongs to the WD repeat CIA1 family. In terms of assembly, interacts with NAR1.

Its subcellular location is the cytoplasm. The protein resides in the nucleus. Its function is as follows. Essential component of the cytosolic iron-sulfur (Fe/S) protein assembly machinery. Required for the maturation of extramitochondrial Fe/S proteins. This Candida glabrata (strain ATCC 2001 / BCRC 20586 / JCM 3761 / NBRC 0622 / NRRL Y-65 / CBS 138) (Yeast) protein is Probable cytosolic iron-sulfur protein assembly protein 1.